We begin with the raw amino-acid sequence, 132 residues long: Glycine cleavage system H protein (132 aa).

A Lipoyl-binding domain is found at 24–106 (IATIGLSAHA…YEEGWFIKVR (83 aa)). Lysine 65 carries the N6-lipoyllysine modification.

It belongs to the GcvH family. In terms of assembly, the glycine cleavage system is composed of four proteins: P, T, L and H. (R)-lipoate serves as cofactor.

In terms of biological role, the glycine cleavage system catalyzes the degradation of glycine. The H protein shuttles the methylamine group of glycine from the P protein to the T protein. The sequence is that of Glycine cleavage system H protein from Picosynechococcus sp. (strain ATCC 27264 / PCC 7002 / PR-6) (Agmenellum quadruplicatum).